Reading from the N-terminus, the 339-residue chain is Phenylalanine--tRNA ligase alpha subunit (339 aa).

Residue E254 coordinates Mg(2+).

Belongs to the class-II aminoacyl-tRNA synthetase family. Phe-tRNA synthetase alpha subunit type 1 subfamily. Tetramer of two alpha and two beta subunits. Requires Mg(2+) as cofactor.

The protein localises to the cytoplasm. It catalyses the reaction tRNA(Phe) + L-phenylalanine + ATP = L-phenylalanyl-tRNA(Phe) + AMP + diphosphate + H(+). This Chlamydia pneumoniae (Chlamydophila pneumoniae) protein is Phenylalanine--tRNA ligase alpha subunit (pheS).